The following is a 135-amino-acid chain: MACGLVASNLNLKPGECLRVRGEVTPDAKSFVLNLGKASNNLCLHFNPRFNAHGDANTIVCNSKDGGAWGTEQREAVFPFQPGSVAEVCITFDQTNLTIKLPDGYEFKFPNRLNLEAINYMAADGDFKIKCVAFD.

N-acetylalanine is present on A2. The Galectin domain maps to 4–135 (GLVASNLNLK…DFKIKCVAFD (132 aa)). 2 positions are modified to N6-acetyllysine: K13 and K29. The residue at position 30 (S30) is a Phosphoserine. A beta-D-galactoside contacts are provided by residues 45-49 (HFNPR), H53, N62, and 69-72 (WGTE). K108 is subject to N6-acetyllysine; alternate. At K108 the chain carries N6-succinyllysine; alternate. N6-acetyllysine is present on K128.

In terms of assembly, homodimer. Binds LGALS3BP. Interacts with CD2, CD3, CD4, CD6, CD7, CD43, ALCAM and CD45. Interacts with laminin (via poly-N-acetyllactosamine). Interacts with SUSD2.

Its subcellular location is the secreted. It is found in the extracellular space. It localises to the extracellular matrix. Lectin that binds beta-galactoside and a wide array of complex carbohydrates. Plays a role in regulating apoptosis, cell proliferation and cell differentiation. Inhibits CD45 protein phosphatase activity and therefore the dephosphorylation of Lyn kinase. Strong inducer of T-cell apoptosis. This is Galectin-1 (LGALS1) from Pongo abelii (Sumatran orangutan).